We begin with the raw amino-acid sequence, 271 residues long: ATP synthase subunit delta (271 aa).

Belongs to the ATPase delta chain family. In terms of assembly, F-type ATPases have 2 components, F(1) - the catalytic core - and F(0) - the membrane proton channel. F(1) has five subunits: alpha(3), beta(3), gamma(1), delta(1), epsilon(1). F(0) has three main subunits: a(1), b(2) and c(10-14). The alpha and beta chains form an alternating ring which encloses part of the gamma chain. F(1) is attached to F(0) by a central stalk formed by the gamma and epsilon chains, while a peripheral stalk is formed by the delta and b chains.

The protein localises to the cell membrane. Functionally, f(1)F(0) ATP synthase produces ATP from ADP in the presence of a proton or sodium gradient. F-type ATPases consist of two structural domains, F(1) containing the extramembraneous catalytic core and F(0) containing the membrane proton channel, linked together by a central stalk and a peripheral stalk. During catalysis, ATP synthesis in the catalytic domain of F(1) is coupled via a rotary mechanism of the central stalk subunits to proton translocation. Its function is as follows. This protein is part of the stalk that links CF(0) to CF(1). It either transmits conformational changes from CF(0) to CF(1) or is implicated in proton conduction. In Corynebacterium aurimucosum (strain ATCC 700975 / DSM 44827 / CIP 107346 / CN-1) (Corynebacterium nigricans), this protein is ATP synthase subunit delta.